Consider the following 898-residue polypeptide: DNA gyrase subunit A (898 aa).

Disordered stretches follow at residues 1 to 22 (MSDD…DDDS) and 36 to 56 (EEEK…EKEG). The region spanning 97–562 (LPDARDGLKP…VMSSINNEDL (466 aa)) is the Topo IIA-type catalytic domain. Residue tyrosine 185 is the O-(5'-phospho-DNA)-tyrosine intermediate of the active site. The GyrA-box motif lies at 589-595 (QRRGGVG).

This sequence belongs to the type II topoisomerase GyrA/ParC subunit family. In terms of assembly, heterotetramer, composed of two GyrA and two GyrB chains. In the heterotetramer, GyrA contains the active site tyrosine that forms a transient covalent intermediate with DNA, while GyrB binds cofactors and catalyzes ATP hydrolysis.

It localises to the cytoplasm. It carries out the reaction ATP-dependent breakage, passage and rejoining of double-stranded DNA.. A type II topoisomerase that negatively supercoils closed circular double-stranded (ds) DNA in an ATP-dependent manner to modulate DNA topology and maintain chromosomes in an underwound state. Negative supercoiling favors strand separation, and DNA replication, transcription, recombination and repair, all of which involve strand separation. Also able to catalyze the interconversion of other topological isomers of dsDNA rings, including catenanes and knotted rings. Type II topoisomerases break and join 2 DNA strands simultaneously in an ATP-dependent manner. The polypeptide is DNA gyrase subunit A (Metamycoplasma arthritidis (strain 158L3-1) (Mycoplasma arthritidis)).